A 413-amino-acid chain; its full sequence is Multidrug resistance protein MdtA (413 aa).

Residues 1–20 form the signal peptide; it reads MKGSNTFRWAIAIGVVVAAA. 2 disordered regions span residues 31 to 57 and 391 to 413; these read SPTA…RDGP and EPQT…GARA. The span at 397–413 shows a compositional bias: basic and acidic residues; the sequence is ADEKSPSRHEGQKGARA.

Belongs to the membrane fusion protein (MFP) (TC 8.A.1) family. Part of a tripartite efflux system composed of MdtA, MdtB and MdtC.

It localises to the cell inner membrane. The sequence is that of Multidrug resistance protein MdtA from Salmonella typhimurium (strain LT2 / SGSC1412 / ATCC 700720).